We begin with the raw amino-acid sequence, 261 residues long: MLHVLRPGYAGAVNGHSNNGNDDETSTTPTLYIFPHAGGDATYYVPFSREFSADIKRIAVHYPGQRDGYGLPALTSIPALADEIFAIMKPSAPPEGAVAFFGHSMGGMLAFEVALRFQSAGYRLIALFVSACSAPGYIRYKQIKDFSDNDMLDLVVRMTGMNPDFFEDEEFRVGVLPTLRAARIIAGYNCPPETTVSCPIYTYIGDKDWIATQEDMKPWRERTTGAFAIRVFPGDHFYLNGNLSELVCDIEDKTLEWCDRA.

Residues serine 104, aspartate 208, and histidine 236 contribute to the active site.

It belongs to the thioesterase family.

The enzyme catalyses a fatty acyl-CoA + H2O = a fatty acid + CoA + H(+). Its function is as follows. Involved in the synthesis of both phthiocerol dimycocerosates (PDIMs) and phenolic glycolipids (PGLs), which are structurally related lipids non-covalently bound to the outer cell wall layer of M.tuberculosis and are important virulence factors. The polypeptide is Thioesterase TesA (tesA) (Mycobacterium leprae (strain TN)).